The following is a 557-amino-acid chain: Organic cation/carnitine transporter 2 (557 aa).

At 1–20 (MRDYDEVTAFLGEWGPFQRL) the chain is on the cytoplasmic side. A helical transmembrane segment spans residues 21–41 (IFFLLSASIIPNGFNGMSIVF). Topologically, residues 42–142 (LAGTPEHRCL…DLVCKDDWKA (101 aa)) are extracellular. 3 N-linked (GlcNAc...) asparagine glycosylation sites follow: asparagine 57, asparagine 64, and asparagine 91. A helical membrane pass occupies residues 143-163 (PLTTSLFFVGVLMGSFISGQL). The Cytoplasmic portion of the chain corresponds to 164–172 (SDRFGRKNV). Residues 173–193 (LFLTMGMQTGFSFLQLFSVNF) traverse the membrane as a helical segment. Topologically, residues 194–197 (EMFT) are extracellular. The chain crosses the membrane as a helical span at residues 198-218 (VLFVLVGMGQISNYVAAFVLG). 218–225 (GTEILSKS) serves as a coordination point for ATP. Residues 219-232 (TEILSKSIRIIFAT) are Cytoplasmic-facing. A helical transmembrane segment spans residues 233–253 (LGVCIFYAFGFMVLPLFAYFI). The Extracellular segment spans residues 254 to 257 (RDWR). A helical membrane pass occupies residues 258–278 (MLLLALTVPGVLCGALWWFIP). Residues 279-341 (ESPRWLISQG…YDLVRTRNIR (63 aa)) lie on the Cytoplasmic side of the membrane. Residues 342-362 (IITIMSIILWLTISVGYFGLS) form a helical membrane-spanning segment. Topologically, residues 363–373 (LDTPNLHGDIY) are extracellular. Residues 374–394 (VNCFLLAAVEVPAYVLAWLLL) traverse the membrane as a helical segment. The Cytoplasmic segment spans residues 395 to 406 (QHLPRRYSISAA). Residues 407–427 (LFLGGSVLLFIQLVPSELFYL) traverse the membrane as a helical segment. The Extracellular portion of the chain corresponds to 428 to 430 (STA). Residues 431-451 (LVMVGKFGITSAYSMVYVYTA) form a helical membrane-spanning segment. The Cytoplasmic segment spans residues 452-462 (ELYPTVVRNMG). Residues 463–483 (VGVSSTASRLGSILSPYFVYL) form a helical membrane-spanning segment. Topologically, residues 484–488 (GAYDR) are extracellular. Residue tyrosine 486 is modified to Phosphotyrosine. Residues 489–509 (FLPYILMGSLTILTAILTLFF) form a helical membrane-spanning segment. Residues 510-557 (PESFGAPLPDTIDQMLRVKGIKQWQIQSQTRTQKDGGESPTVLKSTAF) lie on the Cytoplasmic side of the membrane. A disordered region spans residues 537-557 (SQTRTQKDGGESPTVLKSTAF). Phosphoserine is present on serine 548. The residue at position 550 (threonine 550) is a Phosphothreonine.

The protein belongs to the major facilitator (TC 2.A.1) superfamily. Organic cation transporter (TC 2.A.1.19) family. Interacts with PDZK1. Expressed in the proximal and distal tubules and in the glomeruli in the kidney, in the myocardium, valves, and arterioles in the heart, in the labyrinthine layer of the placenta, and in the cortex, hippocampus, and cerebellum in the brain. Expressed in Sertoli cells in testis.

It is found in the cell membrane. It localises to the apical cell membrane. The protein resides in the basal cell membrane. The enzyme catalyses (R)-carnitine(out) + Na(+)(out) = (R)-carnitine(in) + Na(+)(in). The catalysed reaction is O-acetyl-(R)-carnitine(out) + Na(+)(out) = O-acetyl-(R)-carnitine(in) + Na(+)(in). It catalyses the reaction O-propanoyl-(R)-carnitine(out) + Na(+)(out) = O-propanoyl-(R)-carnitine(in) + Na(+)(in). It carries out the reaction glycine betaine(out) + Na(+)(out) = glycine betaine(in) + Na(+)(in). The enzyme catalyses glycine betaine(out) + (R)-carnitine(in) = glycine betaine(in) + (R)-carnitine(out). The catalysed reaction is O-butanoyl-(R)-carnitine(out) + Na(+)(out) = O-butanoyl-(R)-carnitine(in) + Na(+)(in). It catalyses the reaction (S)-carnitine(out) + Na(+)(out) = (S)-carnitine(in) + Na(+)(in). It carries out the reaction an O-acyl-(R)-carnitine(out) + Na(+)(out) = an O-acyl-(R)-carnitine(in) + Na(+)(in). The enzyme catalyses L-glutamyl-L-arginyl-glycyl-L-methionyl-L-threonine(out) + Na(+)(out) = L-glutamyl-L-arginyl-glycyl-L-methionyl-L-threonine(in) + Na(+)(in). The catalysed reaction is N,N-dimethylglycine(out) + Na(+)(out) = N,N-dimethylglycine(in) + Na(+)(in). Its activity is regulated as follows. Inhibited by emetine, quinidine and verapamil. The IC(50) of emetine is 4.2 uM. Not inhibited by valproic acid. Transport of (R)-carnitine is stimulated by cholesterol in the plasma membrane. Its function is as follows. Sodium-ion dependent, high affinity carnitine transporter. Involved in the active cellular uptake of carnitine. Transports one sodium ion with one molecule of carnitine. Also transports organic cations such as tetraethylammonium (TEA) without the involvement of sodium. Also relative uptake activity ratio of carnitine to TEA is 11.3. May also contribute to regulate the transport of organic compounds in testis across the blood-testis-barrier. The protein is Organic cation/carnitine transporter 2 (Slc22a5) of Rattus norvegicus (Rat).